Here is a 109-residue protein sequence, read N- to C-terminus: Large ribosomal subunit protein uL23 (109 aa).

Belongs to the universal ribosomal protein uL23 family. In terms of assembly, part of the 50S ribosomal subunit. Contacts protein L29, and trigger factor when it is bound to the ribosome.

Functionally, one of the early assembly proteins it binds 23S rRNA. One of the proteins that surrounds the polypeptide exit tunnel on the outside of the ribosome. Forms the main docking site for trigger factor binding to the ribosome. This is Large ribosomal subunit protein uL23 from Prosthecochloris aestuarii (strain DSM 271 / SK 413).